A 541-amino-acid polypeptide reads, in one-letter code: Cytochrome P450 monooxygenase claW (541 aa).

The helical transmembrane segment at 12-32 (VINALVILFSFWAFLSLIRVI) threads the bilayer. Cysteine 480 serves as a coordination point for heme.

This sequence belongs to the cytochrome P450 family. The cofactor is heme.

The protein resides in the membrane. It participates in secondary metabolite biosynthesis; terpenoid biosynthesis. Cytochrome P450 monooxygenase; part of the gene cluster that mediates the biosynthesis of clavilactone A, a meroterpenoid that features a unique benzo-fused ten-membered carbocyclic ring unit with an alpha,beta-epoxy-gamma-lactone moiety, forming an intriguing 10/5/3 tricyclic nested skeleton. Cytochrome P450 monooxygenases claO, claP, claQ, claU, and claW are close orthologs, suggesting that a redundant function or pseudogenes are present in the cla cluster. These monoxygenases are not involved in clavilactone A biosynthesis nor its modification. ClaR, ClaS and ClaT are sufficient to produce clavilactone A. The biosynthesis begins with the prenyltransferase claS that transfers geranyl pyrophosphate (GPP) to hydroquinone to produces geranylhydroquinone. The cytochrome P450 monooxygenase claR then catalyzes the diradical coupling reaction between the intramolecular hydroquinone and allyl moieties to form the benzo-fused ten-membered carbocyclic ring unit of wigantol. Finally the cytochrome P450 monooxygenase claT exquisitely and stereoselectively assembles the alpha,beta-epoxy-gamma-lactone moiety, producing clavilactone A via arnebinol A. In Ampulloclitocybe clavipes (Club foot), this protein is Cytochrome P450 monooxygenase claW.